The chain runs to 188 residues: Large ribosomal subunit protein eL18 (188 aa).

The tract at residues 143–188 (RSAREAEKHFGPAPGVPHSHTKPHVRSKGRKFERARGRRASRAYKN) is disordered. 2 stretches are compositionally biased toward basic residues: residues 161–171 (SHTKPHVRSKG) and 178–188 (RGRRASRAYKN).

Belongs to the eukaryotic ribosomal protein eL18 family.

It localises to the cytoplasm. This chain is Large ribosomal subunit protein eL18 (rpl-18), found in Caenorhabditis briggsae.